Reading from the N-terminus, the 121-residue chain is MARVTIEDCLKEVDSRFTLVHLAVRRVLQLRGGAPPLTEVRNKEVVLALREIAAGKVTVDNIRRLEEAKALPEPVAVTQKEDVARLELKEIMDEATLYDASMEFDEAQQVVEPDAEPSEEG.

The protein belongs to the RNA polymerase subunit omega family. The RNAP catalytic core consists of 2 alpha, 1 beta, 1 beta' and 1 omega subunit. When a sigma factor is associated with the core the holoenzyme is formed, which can initiate transcription.

The catalysed reaction is RNA(n) + a ribonucleoside 5'-triphosphate = RNA(n+1) + diphosphate. Functionally, promotes RNA polymerase assembly. Latches the N- and C-terminal regions of the beta' subunit thereby facilitating its interaction with the beta and alpha subunits. This chain is DNA-directed RNA polymerase subunit omega, found in Syntrophobacter fumaroxidans (strain DSM 10017 / MPOB).